Reading from the N-terminus, the 370-residue chain is Platelet-derived growth factor D (370 aa).

The N-terminal stretch at 1–18 (MHRLIFVYTLICANFCSC) is a signal peptide. The region spanning 52–170 (RDETIQVKGN…PGFKIYYSLL (119 aa)) is the CUB domain. Residues Cys109 and Cys131 are joined by a disulfide bond. A glycan (N-linked (GlcNAc...) asparagine) is linked at Asn276. 2 disulfide bridges follow: Cys302-Cys360 and Cys306-Cys362.

The protein belongs to the PDGF/VEGF growth factor family. Homodimer; disulfide-linked. Interacts with PDGFRB homodimers, and with heterodimers formed by PDGFRA and PDGFRB. Post-translationally, activated by proteolytic cleavage. Proteolytic removal of the N-terminal CUB domain releasing the core domain is necessary for unmasking the receptor-binding epitopes of the core domain. Cleavage after Arg-247 or Arg-249 by urokinase plasminogen activator gives rise to the active form. Expressed at high levels in the heart, pancreas, adrenal gland and ovary and at low levels in placenta, liver, kidney, prostate, testis, small intestine, spleen and colon. In the kidney, expressed by the visceral epithelial cells of the glomeruli. A widespread expression is also seen in the medial smooth muscle cells of arteries and arterioles, as well as in smooth muscle cells of vasa rectae in the medullary area. Expressed in the adventitial connective tissue surrounding the suprarenal artery. In chronic obstructive nephropathy, a persistent expression is seen in glomerular visceral epithelial cells and vascular smooth muscle cells, as well as de novo expression by periglomerular interstitial cells and by some neointimal cells of atherosclerotic vessels. Expression in normal prostate is seen preferentially in the mesenchyme of the gland while expression is increased and more profuse in prostate carcinoma. Expressed in many ovarian, lung, renal and brain cancer-derived cell lines.

The protein resides in the secreted. Functionally, growth factor that plays an essential role in the regulation of embryonic development, cell proliferation, cell migration, survival and chemotaxis. Potent mitogen for cells of mesenchymal origin. Plays an important role in wound healing. Induces macrophage recruitment, increased interstitial pressure, and blood vessel maturation during angiogenesis. Can initiate events that lead to a mesangial proliferative glomerulonephritis, including influx of monocytes and macrophages and production of extracellular matrix. The polypeptide is Platelet-derived growth factor D (PDGFD) (Homo sapiens (Human)).